We begin with the raw amino-acid sequence, 231 residues long: Casein kinase II subunit beta (231 aa).

The protein belongs to the casein kinase 2 subunit beta family. As to quaternary structure, tetramer composed of two alpha chains, one beta chain and one beta' chain. Post-translationally, phosphorylated by alpha subunit.

Regulatory subunit of casein kinase II/CK2. As part of the kinase complex regulates the basal catalytic activity of the alpha subunit a constitutively active serine/threonine-protein kinase that phosphorylates a large number of substrates containing acidic residues C-terminal to the phosphorylated serine or threonine. This Schizosaccharomyces pombe (strain 972 / ATCC 24843) (Fission yeast) protein is Casein kinase II subunit beta.